A 235-amino-acid chain; its full sequence is UDP-2,3-diacylglucosamine hydrolase (235 aa).

Positions 9, 11, 42, 80, and 115 each coordinate Mn(2+). 80-81 (NR) provides a ligand contact to substrate. Residues aspartate 123, serine 161, lysine 165, lysine 168, and histidine 196 each contribute to the substrate site. Mn(2+)-binding residues include histidine 196 and histidine 198.

This sequence belongs to the LpxH family. Mn(2+) is required as a cofactor.

The protein localises to the cell inner membrane. The catalysed reaction is UDP-2-N,3-O-bis[(3R)-3-hydroxytetradecanoyl]-alpha-D-glucosamine + H2O = 2-N,3-O-bis[(3R)-3-hydroxytetradecanoyl]-alpha-D-glucosaminyl 1-phosphate + UMP + 2 H(+). It functions in the pathway glycolipid biosynthesis; lipid IV(A) biosynthesis; lipid IV(A) from (3R)-3-hydroxytetradecanoyl-[acyl-carrier-protein] and UDP-N-acetyl-alpha-D-glucosamine: step 4/6. Hydrolyzes the pyrophosphate bond of UDP-2,3-diacylglucosamine to yield 2,3-diacylglucosamine 1-phosphate (lipid X) and UMP by catalyzing the attack of water at the alpha-P atom. Involved in the biosynthesis of lipid A, a phosphorylated glycolipid that anchors the lipopolysaccharide to the outer membrane of the cell. The sequence is that of UDP-2,3-diacylglucosamine hydrolase from Actinobacillus succinogenes (strain ATCC 55618 / DSM 22257 / CCUG 43843 / 130Z).